Consider the following 431-residue polypeptide: REST corepressor 1 (431 aa).

Residues 1 to 10 are compositionally biased toward basic and acidic residues; sequence MIEKGAEISG. Residues 1–53 are disordered; sequence MIEKGAEISGKRRGRNNAANSKSLGTNVNGSNSWEEGSSSSSSDDEPGGGGMR. Positions 17–28 are enriched in polar residues; it reads NAANSKSLGTNV. A compositionally biased stretch (low complexity) spans 29-42; that stretch reads NGSNSWEEGSSSSS. One can recognise an ELM2 domain in the interval 50–135; sequence GGMRVGLQYQ…KSLADLLNFT (86 aa). In terms of domain architecture, SANT 1 spans 136 to 187; it reads PFPDEWTVEDRVLFEQAFSFHGKTFHRIQQMLPDKSIASLVKFYYSWKKTRS. Positions 190–262 are disordered; that stretch reads SVMDRHARKQ…NRAKRKPPNG (73 aa). The segment covering 224-242 has biased composition (basic and acidic residues); it reads EQPKEAKKEVPKNDTVPHI. Positions 267-314 form a coiled coil; it reads QEDVEAVSANANAATTVLRQLDMELVSIKRQIQNIKQTNSAFKEKLQG. The 52-residue stretch at 327–378 folds into the SANT 2 domain; that stretch reads KFNARWTTEEQLLAVQAIRMYGRDFQAISDVIGNKSVVQVKNFFVNYRRRFN.

Belongs to the CoREST family. In terms of assembly, component of a BHC histone deacetylase complex that contains KDM1A. Expressed in territories in which neurogenesis takes place.

Its subcellular location is the nucleus. Essential component of the BHC complex, a corepressor complex that represses transcription of neuron-specific genes in non-neuronal cells. The BHC complex is recruited at RE1/NRSE sites by REST and acts by deacetylating and demethylating specific sites on histones, thereby acting as a chromatin modifier. In the BHC complex, it serves as a molecular beacon for the recruitment of molecular machinery that imposes silencing across a chromosomal interval. Plays a central role in demethylation of Lys-4 of histone H3 by promoting demethylase activity of KDM1A on core histones and nucleosomal substrates. The chain is REST corepressor 1 (rcor1) from Xenopus laevis (African clawed frog).